A 113-amino-acid polypeptide reads, in one-letter code: T cell receptor alpha variable 8-4 (113 aa).

A signal peptide spans 1 to 20 (MLLLLVPVLEVIFTLGGTRA). Residues 21 to 113 (QSVTQLGSHV…DAAEYFCAVS (93 aa)) form the Ig-like domain. A disulfide bridge links Cys42 with Cys110. N-linked (GlcNAc...) asparagine glycosylation occurs at Asn43.

As to quaternary structure, alpha-beta TR is a heterodimer composed of an alpha and beta chain; disulfide-linked. The alpha-beta TR is associated with the transmembrane signaling CD3 coreceptor proteins to form the TR-CD3 (TcR or TCR). The assembly of alpha-beta TR heterodimers with CD3 occurs in the endoplasmic reticulum where a single alpha-beta TR heterodimer associates with one CD3D-CD3E heterodimer, one CD3G-CD3E heterodimer and one CD247 homodimer forming a stable octameric structure. CD3D-CD3E and CD3G-CD3E heterodimers preferentially associate with TR alpha and TR beta chains, respectively. The association of the CD247 homodimer is the last step of TcR assembly in the endoplasmic reticulum and is required for transport to the cell surface.

The protein resides in the cell membrane. Functionally, v region of the variable domain of T cell receptor (TR) alpha chain that participates in the antigen recognition. Alpha-beta T cell receptors are antigen specific receptors which are essential to the immune response and are present on the cell surface of T lymphocytes. Recognize peptide-major histocompatibility (MH) (pMH) complexes that are displayed by antigen presenting cells (APC), a prerequisite for efficient T cell adaptive immunity against pathogens. Binding of alpha-beta TR to pMH complex initiates TR-CD3 clustering on the cell surface and intracellular activation of LCK that phosphorylates the ITAM motifs of CD3G, CD3D, CD3E and CD247 enabling the recruitment of ZAP70. In turn ZAP70 phosphorylates LAT, which recruits numerous signaling molecules to form the LAT signalosome. The LAT signalosome propagates signal branching to three major signaling pathways, the calcium, the mitogen-activated protein kinase (MAPK) kinase and the nuclear factor-kappa-B (NF-kB) pathways, leading to the mobilization of transcription factors that are critical for gene expression and essential for T cell growth and differentiation. The T cell repertoire is generated in the thymus, by V-(D)-J rearrangement. This repertoire is then shaped by intrathymic selection events to generate a peripheral T cell pool of self-MH restricted, non-autoaggressive T cells. Post-thymic interaction of alpha-beta TR with the pMH complexes shapes TR structural and functional avidity. This chain is T cell receptor alpha variable 8-4, found in Homo sapiens (Human).